A 157-amino-acid polypeptide reads, in one-letter code: SsrA-binding protein (157 aa).

It belongs to the SmpB family.

Its subcellular location is the cytoplasm. Required for rescue of stalled ribosomes mediated by trans-translation. Binds to transfer-messenger RNA (tmRNA), required for stable association of tmRNA with ribosomes. tmRNA and SmpB together mimic tRNA shape, replacing the anticodon stem-loop with SmpB. tmRNA is encoded by the ssrA gene; the 2 termini fold to resemble tRNA(Ala) and it encodes a 'tag peptide', a short internal open reading frame. During trans-translation Ala-aminoacylated tmRNA acts like a tRNA, entering the A-site of stalled ribosomes, displacing the stalled mRNA. The ribosome then switches to translate the ORF on the tmRNA; the nascent peptide is terminated with the 'tag peptide' encoded by the tmRNA and targeted for degradation. The ribosome is freed to recommence translation, which seems to be the essential function of trans-translation. This Syntrophomonas wolfei subsp. wolfei (strain DSM 2245B / Goettingen) protein is SsrA-binding protein.